The chain runs to 368 residues: Branched-chain-amino-acid aminotransferase (368 aa).

Arg101 is a binding site for pyridoxal 5'-phosphate. Position 204 is an N6-(pyridoxal phosphate)lysine (Lys204). Pyridoxal 5'-phosphate-binding positions include Tyr209, 271–272 (IT), and Thr314.

It belongs to the class-IV pyridoxal-phosphate-dependent aminotransferase family. In terms of assembly, homodimer. Pyridoxal 5'-phosphate serves as cofactor.

The catalysed reaction is L-leucine + 2-oxoglutarate = 4-methyl-2-oxopentanoate + L-glutamate. It catalyses the reaction L-isoleucine + 2-oxoglutarate = (S)-3-methyl-2-oxopentanoate + L-glutamate. The enzyme catalyses L-valine + 2-oxoglutarate = 3-methyl-2-oxobutanoate + L-glutamate. The protein operates within amino-acid biosynthesis; L-isoleucine biosynthesis; L-isoleucine from 2-oxobutanoate: step 4/4. It functions in the pathway amino-acid biosynthesis; L-leucine biosynthesis; L-leucine from 3-methyl-2-oxobutanoate: step 4/4. It participates in amino-acid biosynthesis; L-valine biosynthesis; L-valine from pyruvate: step 4/4. In terms of biological role, catalyzes the reversible transfers of an amino group from glutamate to the alpha-ketoacid of the respective amino acid in the final step in the biosynthesis of branchedchain amino acids. This Mycobacterium tuberculosis (strain CDC 1551 / Oshkosh) protein is Branched-chain-amino-acid aminotransferase (ilvE).